The chain runs to 353 residues: Aliphatic aldoxime dehydratase (353 aa).

S219 contacts an aliphatic aldoxime. Heme b is bound at residue H299. H320 provides a ligand contact to an aliphatic aldoxime. Residue H320 is part of the active site.

Belongs to the heme-containing dehydratase family. Homodimer. Heme b serves as cofactor.

The catalysed reaction is an aliphatic aldoxime = a nitrile + H2O. Its activity is regulated as follows. Active when the heme iron is in the ferrous state. The activity is enhanced by reducing agents, such as Na(2)S, Na(2)S(2)(O4), 2-mercaptoethanol, and L-cysteine and supplementary additions of electron acceptors such as flavins, sulfite ion, and vitamin K3. The effect of various chemicals on the enzyme activity is different in the presence and absence of the reducing reagent, Na(2)S, which acts not only as a reductant but also changes the substrate specificity of the enzyme. Catalyzes the dehydration of aldoximes to their corresponding nitrile. Is active toward various arylalkyl- and alkyl-aldoximes, and to a lesser extent toward aryl-aldoximes. In Rhodococcus erythropolis (Arthrobacter picolinophilus), this protein is Aliphatic aldoxime dehydratase.